The following is a 751-amino-acid chain: Photosystem I P700 chlorophyll a apoprotein A1 (751 aa).

A run of 8 helical transmembrane segments spans residues 73–96 (VFSA…FHGA), 159–182 (LYTT…FHYH), 198–222 (LNHH…HVSL), 294–312 (TVHH…GHQY), 349–372 (WHAQ…HHMY), 388–414 (LSLF…IFMV), 436–458 (AMIS…LYIH), and 533–551 (FMVH…LILL). C575 and C584 together coordinate [4Fe-4S] cluster. 2 helical membrane-spanning segments follow: residues 591-612 (HVFL…HFSW) and 665-687 (LSAY…MFLF). Residue H676 coordinates chlorophyll a'. Residues M684 and Y692 each contribute to the chlorophyll a site. A phylloquinone-binding site is contributed by W693. A helical transmembrane segment spans residues 725–745 (AVGVAHYLLGGIATTWSFFLA).

It belongs to the PsaA/PsaB family. The PsaA/B heterodimer binds the P700 chlorophyll special pair and subsequent electron acceptors. PSI consists of a core antenna complex that captures photons, and an electron transfer chain that converts photonic excitation into a charge separation. The eukaryotic PSI reaction center is composed of at least 11 subunits. Requires P700 is a chlorophyll a/chlorophyll a' dimer, A0 is one or more chlorophyll a, A1 is one or both phylloquinones and FX is a shared 4Fe-4S iron-sulfur center. as cofactor.

The protein resides in the plastid. The protein localises to the chloroplast thylakoid membrane. The enzyme catalyses reduced [plastocyanin] + hnu + oxidized [2Fe-2S]-[ferredoxin] = oxidized [plastocyanin] + reduced [2Fe-2S]-[ferredoxin]. PsaA and PsaB bind P700, the primary electron donor of photosystem I (PSI), as well as the electron acceptors A0, A1 and FX. PSI is a plastocyanin/cytochrome c6-ferredoxin oxidoreductase, converting photonic excitation into a charge separation, which transfers an electron from the donor P700 chlorophyll pair to the spectroscopically characterized acceptors A0, A1, FX, FA and FB in turn. Oxidized P700 is reduced on the lumenal side of the thylakoid membrane by plastocyanin or cytochrome c6. The sequence is that of Photosystem I P700 chlorophyll a apoprotein A1 from Chlorella vulgaris (Green alga).